The sequence spans 240 residues: B-cell receptor-associated protein 29 (240 aa).

Topologically, residues 1–6 (MTLQWT) are lumenal. The chain crosses the membrane as a helical span at residues 7-27 (AVATFLYAEIGLILIFCLPFI). The Cytoplasmic portion of the chain corresponds to 28–43 (PPQRWQKIFSFSVWGK). The chain crosses the membrane as a helical span at residues 44–64 (IASFWNKAFLTIIILLIVLFL). At 65 to 103 (DAVREVRKYSSTHTIEKSSASRPAAYEHTQMKLFRSQRN) the chain is on the lumenal side. A helical membrane pass occupies residues 104 to 124 (LYISGFSLFFWLVLRRLVTLI). The Cytoplasmic portion of the chain corresponds to 125-240 (TQLAKELSHK…DRAGKDKKCL (116 aa)). Residues 166-233 (GKEEEHILEA…REHSELQDRA (68 aa)) adopt a coiled-coil conformation. The Di-lysine motif signature appears at 237–240 (KKCL).

This sequence belongs to the BCAP29/BCAP31 family. Homodimer and heterodimer with BCAP31. Binds CASP8 as a complex containing BCAP31, BCAP29, BCL2 and/or BCL2L1. Interacts with VAMP3, VAMP1 and membrane IgD immunoglobulins. May interact with ACTG1 and non-muscle myosin II.

Its subcellular location is the endoplasmic reticulum membrane. In terms of biological role, may play a role in anterograde transport of membrane proteins from the endoplasmic reticulum to the Golgi. May be involved in CASP8-mediated apoptosis. This is B-cell receptor-associated protein 29 (BCAP29) from Bos taurus (Bovine).